We begin with the raw amino-acid sequence, 156 residues long: ATP synthase subunit b (156 aa).

A helical membrane pass occupies residues 7–29 (LFAQMVVFLVLAWFTMKFVWPPL).

The protein belongs to the ATPase B chain family. In terms of assembly, F-type ATPases have 2 components, F(1) - the catalytic core - and F(0) - the membrane proton channel. F(1) has five subunits: alpha(3), beta(3), gamma(1), delta(1), epsilon(1). F(0) has three main subunits: a(1), b(2) and c(10-14). The alpha and beta chains form an alternating ring which encloses part of the gamma chain. F(1) is attached to F(0) by a central stalk formed by the gamma and epsilon chains, while a peripheral stalk is formed by the delta and b chains.

The protein resides in the cell inner membrane. F(1)F(0) ATP synthase produces ATP from ADP in the presence of a proton or sodium gradient. F-type ATPases consist of two structural domains, F(1) containing the extramembraneous catalytic core and F(0) containing the membrane proton channel, linked together by a central stalk and a peripheral stalk. During catalysis, ATP synthesis in the catalytic domain of F(1) is coupled via a rotary mechanism of the central stalk subunits to proton translocation. Its function is as follows. Component of the F(0) channel, it forms part of the peripheral stalk, linking F(1) to F(0). In Burkholderia multivorans (strain ATCC 17616 / 249), this protein is ATP synthase subunit b.